The primary structure comprises 175 residues: Co-chaperone protein HscB homolog (175 aa).

A J domain is found at 2 to 74 (NYFQLFNIEV…LQRAEYILVQ (73 aa)).

Belongs to the HscB family. In terms of assembly, interacts with HscA and stimulates its ATPase activity.

Functionally, co-chaperone involved in the maturation of iron-sulfur cluster-containing proteins. Seems to help targeting proteins to be folded toward HscA. The protein is Co-chaperone protein HscB homolog of Colwellia psychrerythraea (strain 34H / ATCC BAA-681) (Vibrio psychroerythus).